The sequence spans 185 residues: Protein-arginine kinase activator protein (185 aa).

A phosphoarginine mark is found at Arg-115 and Arg-169. A UVR domain is found at 139–174 (RRQIDMLKKELESLIHQEEFENAAHVRDQIRLLEQS).

In terms of assembly, interacts with McsB. In terms of processing, phosphorylated on Arg residues by McsB.

Functionally, activates the phosphorylation activity of the protein-arginine kinase McsB. Is required for the delocalization of competence proteins from the cell poles. This chain is Protein-arginine kinase activator protein (mcsA), found in Bacillus subtilis (strain 168).